We begin with the raw amino-acid sequence, 343 residues long: Methionine import ATP-binding protein MetN (343 aa).

Positions 2–241 (ITLSHITKQF…PKTPLAQAFI (240 aa)) constitute an ABC transporter domain. ATP is bound at residue 38 to 45 (GASGAGKS).

Belongs to the ABC transporter superfamily. Methionine importer (TC 3.A.1.24) family. The complex is composed of two ATP-binding proteins (MetN), two transmembrane proteins (MetI) and a solute-binding protein (MetQ).

The protein resides in the cell inner membrane. The enzyme catalyses L-methionine(out) + ATP + H2O = L-methionine(in) + ADP + phosphate + H(+). The catalysed reaction is D-methionine(out) + ATP + H2O = D-methionine(in) + ADP + phosphate + H(+). In terms of biological role, part of the ABC transporter complex MetNIQ involved in methionine import. Responsible for energy coupling to the transport system. The sequence is that of Methionine import ATP-binding protein MetN from Sodalis glossinidius (strain morsitans).